The sequence spans 427 residues: Adenylosuccinate synthetase (427 aa).

GTP contacts are provided by residues 12-18 (GDEGKGK) and 40-42 (GHT). Aspartate 13 functions as the Proton acceptor in the catalytic mechanism. Aspartate 13 and glycine 40 together coordinate Mg(2+). IMP-binding positions include 13-16 (DEGK), 38-41 (NAGH), threonine 128, arginine 142, glutamine 223, threonine 238, and arginine 302. Histidine 41 serves as the catalytic Proton donor. Substrate is bound at residue 298 to 304 (TTTGRPR). Residues arginine 304, 330 to 332 (KLD), and 412 to 414 (SVG) each bind GTP.

Belongs to the adenylosuccinate synthetase family. In terms of assembly, homodimer. Requires Mg(2+) as cofactor.

Its subcellular location is the cytoplasm. The enzyme catalyses IMP + L-aspartate + GTP = N(6)-(1,2-dicarboxyethyl)-AMP + GDP + phosphate + 2 H(+). The protein operates within purine metabolism; AMP biosynthesis via de novo pathway; AMP from IMP: step 1/2. Plays an important role in the de novo pathway of purine nucleotide biosynthesis. Catalyzes the first committed step in the biosynthesis of AMP from IMP. This is Adenylosuccinate synthetase from Carboxydothermus hydrogenoformans (strain ATCC BAA-161 / DSM 6008 / Z-2901).